The sequence spans 384 residues: Glucose-fructose oxidoreductase domain-containing protein 2 (384 aa).

The first 25 residues, 1–25 (MMTLPGIGVFGTGNTARVLIQLLRA), serve as a signal peptide directing secretion. The disordered stretch occupies residues 358 to 384 (GEWESVELTNEETDSNQNLSEVIQHNL). Residues 372–384 (SNQNLSEVIQHNL) are compositionally biased toward polar residues.

Belongs to the Gfo/Idh/MocA family.

The protein localises to the secreted. Its subcellular location is the extracellular space. The protein resides in the extracellular matrix. Promotes matrix assembly. The protein is Glucose-fructose oxidoreductase domain-containing protein 2 (gfod2) of Xenopus laevis (African clawed frog).